Here is a 249-residue protein sequence, read N- to C-terminus: Aliphatic sulfonates import ATP-binding protein SsuB 2 (249 aa).

An ABC transporter domain is found at 5-233; it reads LDLLEIRKAY…PRDRRAVELA (229 aa). ATP is bound at residue 37-44; it reads GPSGCGKS.

It belongs to the ABC transporter superfamily. Aliphatic sulfonates importer (TC 3.A.1.17.2) family. As to quaternary structure, the complex is composed of two ATP-binding proteins (SsuB), two transmembrane proteins (SsuC) and a solute-binding protein (SsuA).

The protein resides in the cell inner membrane. The enzyme catalyses ATP + H2O + aliphatic sulfonate-[sulfonate-binding protein]Side 1 = ADP + phosphate + aliphatic sulfonateSide 2 + [sulfonate-binding protein]Side 1.. Part of the ABC transporter complex SsuABC involved in aliphatic sulfonates import. Responsible for energy coupling to the transport system. The protein is Aliphatic sulfonates import ATP-binding protein SsuB 2 of Pseudomonas aeruginosa (strain ATCC 15692 / DSM 22644 / CIP 104116 / JCM 14847 / LMG 12228 / 1C / PRS 101 / PAO1).